The primary structure comprises 860 residues: Alpha,alpha-trehalose-phosphate synthase [UDP-forming] 6 (860 aa).

Ser5 is modified (phosphoserine). Residues 53–557 are glycosyltransferase; the sequence is DRIIIVANEL…ARSFLQDLER (505 aa).

In the N-terminal section; belongs to the glycosyltransferase 20 family. It in the C-terminal section; belongs to the trehalose phosphatase family. Binds to the phosphopeptide-binding site of GRF/14-3-3. Post-translationally, phosphorylated. In terms of tissue distribution, expressed in seedlings, leaves, stems, flowers, siliques and roots.

The catalysed reaction is D-glucose 6-phosphate + UDP-alpha-D-glucose = alpha,alpha-trehalose 6-phosphate + UDP + H(+). Its function is as follows. Regulates plant architecture, shape of epidermal pavement cells and branching of trichomes. In Arabidopsis thaliana (Mouse-ear cress), this protein is Alpha,alpha-trehalose-phosphate synthase [UDP-forming] 6.